The chain runs to 479 residues: Solute carrier family 46 member 2 (479 aa).

The Cytoplasmic segment spans residues 1 to 23 (MGPGGTCPWSSRLSGFRVRTWIE). The chain crosses the membrane as a helical span at residues 24-44 (PVVASTQVAGSLYDAGLLLVV). Residues 45-80 (KESFKSEAGGSSNYSANQSLVEYQEDQQQKAISNFN) lie on the Extracellular side of the membrane. Residues N57 and N61 are each glycosylated (N-linked (GlcNAc...) asparagine). A helical transmembrane segment spans residues 81–101 (IIYNLVLGLTPLLSAYGLGWL). At 102-110 (SDRYHRKIS) the chain is on the cytoplasmic side. The helical transmembrane segment at 111 to 131 (ICTAMLGFLLSRIGLLLKVML) threads the bilayer. At 132–140 (DWPVEVMYG) the chain is on the extracellular side. Residues 141 to 161 (AAALNGLCGSFSAYWSGVMAL) traverse the membrane as a helical segment. The Cytoplasmic portion of the chain corresponds to 162–174 (GSLGCSEGRRSVR). Residues 175–195 (LILIDLVLGLAGFSGSMASGH) traverse the membrane as a helical segment. The Extracellular portion of the chain corresponds to 196–207 (LFKQIVGHSAQG). The helical transmembrane segment at 208–228 (LLLTACSVGCAAFALFYSLFV) threads the bilayer. Residues 229–281 (LKVPESKPNKVHPTVDTVSGMMGTYRTLDPDQQDKQNVPRNPRTPGKGKSSQR) are Cytoplasmic-facing. The disordered stretch occupies residues 255-277 (TLDPDQQDKQNVPRNPRTPGKGK). The helical transmembrane segment at 282-302 (EVVALLFVGAIIYDLAAVGTV) threads the bilayer. Topologically, residues 303–321 (DVMALFVLKEPLHWNQVQL) are extracellular. The chain crosses the membrane as a helical span at residues 322 to 342 (GYGMASGYIIFITSFLGVLVF). Topologically, residues 343–348 (SRCFRD) are cytoplasmic. A helical transmembrane segment spans residues 349–369 (TTMIIIGMLSFGSGALLLAFV). Topologically, residues 370–371 (KE) are extracellular. Residues 372 to 392 (TYMFYIARAIMLFALIPITTI) traverse the membrane as a helical segment. Residues 393 to 407 (RSAMSKLIKDSSYGK) lie on the Cytoplasmic side of the membrane. The chain crosses the membrane as a helical span at residues 408–428 (IFVILQLCLTLTGVVTSTIYN). The Extracellular segment spans residues 429–441 (KIYQLTLDKFIGT). A helical membrane pass occupies residues 442 to 462 (CFVLSSFLSFLAIVPIGVVAY). Over 463-479 (KQVPRSQQGECAEKQRS) the chain is Cytoplasmic.

This sequence belongs to the major facilitator superfamily. SLC46A family. In terms of processing, glycosylated. In terms of tissue distribution, expressed on cortical epithelial cells in the thymus. Mainly expressed in the thymic cortex and is highly enriched in SCID thymus. Also expressed in lymph nodes, heart, fetal liver, brain, spleen, intestine and kidney, but not in adult liver, skin, skeletal muscle and lung. Expressed in skin epidermis.

Its subcellular location is the endosome membrane. It is found in the cell membrane. It carries out the reaction N-acetyl-beta-D-glucosaminyl-(1-&gt;4)-1,6-anhydro-N-acetyl-beta-D-muramoyl-L-alanyl-gamma-D-glutamyl-meso-2,6-diaminopimeloyl-D-alanine(out) + n H(+)(out) = N-acetyl-beta-D-glucosaminyl-(1-&gt;4)-1,6-anhydro-N-acetyl-beta-D-muramoyl-L-alanyl-gamma-D-glutamyl-meso-2,6-diaminopimeloyl-D-alanine(in) + n H(+)(in). The enzyme catalyses L-alanyl-gamma-D-glutamyl-meso-2,6-diaminopimelate(out) + n H(+)(out) = L-alanyl-gamma-D-glutamyl-meso-2,6-diaminopimelate(in) + n H(+)(in). It catalyses the reaction N-acetyl-D-muramoyl-L-alanyl-D-isoglutamine(out) + n H(+)(out) = N-acetyl-D-muramoyl-L-alanyl-D-isoglutamine(in) + n H(+)(in). The catalysed reaction is 2',3'-cGAMP(out) + n H(+)(out) = 2',3'-cGAMP(in) + n H(+)(in). It carries out the reaction 3',3'-cGAMP(out) + n H(+)(out) = 3',3'-cGAMP(in) + n H(+)(in). With respect to regulation, down-regulated by the anti-inflammatory drug methotrexate. In terms of biological role, proton-coupled transporter that delivers pathogen-associated or danger-associated molecular patterns to cytosolic pattern recognition receptors as part of the innate immune response to microbes or tissue injury. Has selectivity toward muropeptides that contain the amino acid diaminopimelic acid (DAP-type peptidoglycan muropeptides) including Tri-DAP and tracheal toxin (TCT), common in Gram-negative bacteria and Gram-positive bacilli. In the context of immune recognition of skin microbiota, shuttles bacterial muropeptides across the endolysosomal membranes into the cytosol for recognition by NOD1, triggering MYD88-dependent secretion of IL1A and neutrophil recruitment in a pyroptosis-type inflammatory process. To a lesser extent and redundantly, transports muramyl dipeptides derived from most bacterial proteoglycans, eliciting NOD2 receptor activation and downstream inflammatory responses. Postulated to function as an importer of cyclic GMP-AMP dinucleotides (cGAMPs) in monocyte and macrophage cell lineages. Selectively imports cGAMPs derived from pathogenic bacteria such as 3'3'-cGAMP thus providing for differential immune recognition of pathogenic versus commensal bacteria. During tumorigenesis may transport extracellular tumor-derived 2'3'-cGAMP across the plasma membrane of M1-polarized macrophages to activate the anti-tumoral stimulator of interferon genes (STING) pathway. The transport mechanism, its electrogenicity and stoichiometry remain to be elucidated. The protein is Solute carrier family 46 member 2 of Mus musculus (Mouse).